The primary structure comprises 524 residues: Bifunctional purine biosynthesis protein PurH (524 aa).

The MGS-like domain maps to 1-144 (MTRRALVSVS…KNSAHVGVVV (144 aa)).

Belongs to the PurH family.

The catalysed reaction is (6R)-10-formyltetrahydrofolate + 5-amino-1-(5-phospho-beta-D-ribosyl)imidazole-4-carboxamide = 5-formamido-1-(5-phospho-D-ribosyl)imidazole-4-carboxamide + (6S)-5,6,7,8-tetrahydrofolate. The enzyme catalyses IMP + H2O = 5-formamido-1-(5-phospho-D-ribosyl)imidazole-4-carboxamide. It functions in the pathway purine metabolism; IMP biosynthesis via de novo pathway; 5-formamido-1-(5-phospho-D-ribosyl)imidazole-4-carboxamide from 5-amino-1-(5-phospho-D-ribosyl)imidazole-4-carboxamide (10-formyl THF route): step 1/1. The protein operates within purine metabolism; IMP biosynthesis via de novo pathway; IMP from 5-formamido-1-(5-phospho-D-ribosyl)imidazole-4-carboxamide: step 1/1. The polypeptide is Bifunctional purine biosynthesis protein PurH (Anaeromyxobacter dehalogenans (strain 2CP-1 / ATCC BAA-258)).